Here is a 201-residue protein sequence, read N- to C-terminus: uncharacterized protein (201 aa).

A signal peptide spans 1–28 (MMTFKNLRYGLSSSVVLAASLFSVLSYA).

The protein belongs to the fimbrial protein family.

The protein resides in the fimbrium. In terms of biological role, part of the yadCKLM-htrE-yadVN fimbrial operon. Could contribute to adhesion to various surfaces in specific environmental niches. This is an uncharacterized protein from Escherichia coli (strain K12).